The sequence spans 78 residues: D-alanyl carrier protein (78 aa).

The 78-residue stretch at 1 to 78 (MDFKQEVLDV…NIVNQLSELK (78 aa)) folds into the Carrier domain. Residue Ser36 is modified to O-(pantetheine 4'-phosphoryl)serine.

The protein belongs to the DltC family. 4'-phosphopantetheine is transferred from CoA to a specific serine of apo-DCP.

It is found in the cytoplasm. Its pathway is cell wall biogenesis; lipoteichoic acid biosynthesis. Functionally, carrier protein involved in the D-alanylation of lipoteichoic acid (LTA). The loading of thioester-linked D-alanine onto DltC is catalyzed by D-alanine--D-alanyl carrier protein ligase DltA. The DltC-carried D-alanyl group is further transferred to cell membrane phosphatidylglycerol (PG) by forming an ester bond, probably catalyzed by DltD. D-alanylation of LTA plays an important role in modulating the properties of the cell wall in Gram-positive bacteria, influencing the net charge of the cell wall. The chain is D-alanyl carrier protein from Bacillus subtilis (strain 168).